Consider the following 452-residue polypeptide: La-related protein 1B (452 aa).

Positions 1 to 22 are enriched in low complexity; the sequence is MATTASSAANSASRFSIDSSIS. A disordered region spans residues 1-251; that stretch reads MATTASSAAN…GFSHRNYSGR (251 aa). Ala2 is subject to N-acetylalanine. Polar residues predominate over residues 44 to 68; it reads LSLSQDDPFSAPSVSPPTGNNSSDY. Low complexity-rich tracts occupy residues 99–117, 136–163, 171–185, and 206–223; these read SWPA…SPSL, ATSN…VNNS, NNNT…NVSN, and SGNF…SYPR. A compositionally biased stretch (basic and acidic residues) spans 225–236; sequence EGLHHGNRRNYE. Residues 237–247 are compositionally biased toward polar residues; that stretch reads HGNQSGFSHRN. The 90-residue stretch at 328–417 folds into the HTH La-type RNA-binding domain; the sequence is RNFDAILYNK…RGDWDKYLLP (90 aa). A disordered region spans residues 419-452; it reads EPSRSGPAAGASNNASLVSQIESMTLSERSREGV. Residues 422–434 are compositionally biased toward low complexity; that stretch reads RSGPAAGASNNAS. The span at 435-445 shows a compositional bias: polar residues; sequence LVSQIESMTLS.

The protein belongs to the LARP family.

The protein localises to the cytoplasm. In terms of biological role, promotes leaf senescence. This Arabidopsis thaliana (Mouse-ear cress) protein is La-related protein 1B (LARP1B).